The sequence spans 548 residues: Chaperonin GroEL (548 aa).

Residues 30-33 (TLGP), K51, 87-91 (DGTTT), G415, 479-481 (NAA), and D495 each bind ATP.

The protein belongs to the chaperonin (HSP60) family. Forms a cylinder of 14 subunits composed of two heptameric rings stacked back-to-back. Interacts with the co-chaperonin GroES.

Its subcellular location is the cytoplasm. It carries out the reaction ATP + H2O + a folded polypeptide = ADP + phosphate + an unfolded polypeptide.. Together with its co-chaperonin GroES, plays an essential role in assisting protein folding. The GroEL-GroES system forms a nano-cage that allows encapsulation of the non-native substrate proteins and provides a physical environment optimized to promote and accelerate protein folding. This is Chaperonin GroEL from Klebsiella aerogenes (strain ATCC 13048 / DSM 30053 / CCUG 1429 / JCM 1235 / KCTC 2190 / NBRC 13534 / NCIMB 10102 / NCTC 10006 / CDC 819-56) (Enterobacter aerogenes).